Reading from the N-terminus, the 574-residue chain is MESLCGVLGFLLLAAGLPLQAAKRFRDVLGHEQYPDHMREHNQLRGWSSDENEWDEHLYPVWRRGDGRWKDSWEGGRVQAVLTSDSPALVGSNITFVVNLVFPRCQKEDANGNIVYEKNCRNDLGLTSDLHVYNWTAGADDGDWEDGTSRSQHLRFPDRRPFPRPHGWKKWSFVYVFHTLGQYFQKLGRCSARVSINTVNLTAGPQVMEVTVFRRYGRAYIPISKVKDVYVITDQIPVFVTMSQKNDRNLSDEIFLRDLPIVFDVLIHDPSHFLNDSAISYKWNFGDNTGLFVSNNHTLNHTYVLNGTFNLNLTVQTAVPGPCPPPSPSTPPPPSTPPSPPPSPLPTLSTPSPSLMPTGYKSMELSDISNENCRINRYGYFRATITIVEGILEVSIMQIADVPMPTPQPANSLMDFTVTCKGATPMEACTIISDPTCQIAQNRVCSPVAVDGLCLLSVRRAFNGSGTYCVNFTLGDDASLALTSTLISIPGKDPDSPLRAVNGVLISIGCLAVLVTMVTILLYKKHKAYKPIGNCPRNTVKGKGLSVLLSHAKAPFFRGDQEKDPLLQDKPRTL.

The first 22 residues, 1–22 (MESLCGVLGFLLLAAGLPLQAA), serve as a signal peptide directing secretion. The Extracellular portion of the chain corresponds to 23 to 502 (KRFRDVLGHE…DPDSPLRAVN (480 aa)). Residues N93, N134, N200, N249, N275, N296, N300, N306, and N312 are each glycosylated (N-linked (GlcNAc...) asparagine). The region spanning 250-338 (LSDEIFLRDL…STPPPPSTPP (89 aa)) is the PKD domain. The disordered stretch occupies residues 320-353 (PGPCPPPSPSTPPPPSTPPSPPPSPLPTLSTPSP). A compositionally biased stretch (pro residues) spans 321–345 (GPCPPPSPSTPPPPSTPPSPPPSPL). N-linked (GlcNAc...) asparagine glycosylation is found at N463 and N471. A helical transmembrane segment spans residues 503–523 (GVLISIGCLAVLVTMVTILLY). At 524 to 574 (KKHKAYKPIGNCPRNTVKGKGLSVLLSHAKAPFFRGDQEKDPLLQDKPRTL) the chain is on the cytoplasmic side. S546 is subject to Phosphoserine. A Cell attachment site motif is present at residues 558-560 (RGD).

Belongs to the PMEL/NMB family. In terms of tissue distribution, may be up-regulated in bone metastatic breast cancer cells.

It localises to the cell membrane. Its subcellular location is the melanosome membrane. The protein localises to the early endosome membrane. Functionally, could be a melanogenic enzyme. In Mus musculus (Mouse), this protein is Transmembrane glycoprotein NMB (Gpnmb).